Reading from the N-terminus, the 218-residue chain is N-(5'-phosphoribosyl)anthranilate isomerase (218 aa).

Belongs to the TrpF family.

The enzyme catalyses N-(5-phospho-beta-D-ribosyl)anthranilate = 1-(2-carboxyphenylamino)-1-deoxy-D-ribulose 5-phosphate. It participates in amino-acid biosynthesis; L-tryptophan biosynthesis; L-tryptophan from chorismate: step 3/5. The chain is N-(5'-phosphoribosyl)anthranilate isomerase from Chelativorans sp. (strain BNC1).